The primary structure comprises 59 residues: Large ribosomal subunit protein uL30 (59 aa).

Belongs to the universal ribosomal protein uL30 family. In terms of assembly, part of the 50S ribosomal subunit.

The polypeptide is Large ribosomal subunit protein uL30 (Citrifermentans bemidjiense (strain ATCC BAA-1014 / DSM 16622 / JCM 12645 / Bem) (Geobacter bemidjiensis)).